A 129-amino-acid polypeptide reads, in one-letter code: uncharacterized protein (129 aa).

Residues 1–13 show a composition bias toward low complexity; that stretch reads MSDVAETVVAQEP. Positions 1–129 are disordered; sequence MSDVAETVVA…SGDAPAVAAE (129 aa). Positions 34–94 are enriched in basic and acidic residues; it reads IDEKTSEQNG…KRVSSAHEEA (61 aa). Over residues 117-129 the composition is skewed to low complexity; it reads VAASGDAPAVAAE.

This is an uncharacterized protein from Caenorhabditis elegans.